The following is a 297-amino-acid chain: Putative S-adenosyl-L-methionine-dependent methyltransferase Mmcs_1044 (297 aa).

Residues D124 and 153–154 (DL) contribute to the S-adenosyl-L-methionine site.

This sequence belongs to the UPF0677 family.

Functionally, exhibits S-adenosyl-L-methionine-dependent methyltransferase activity. The sequence is that of Putative S-adenosyl-L-methionine-dependent methyltransferase Mmcs_1044 from Mycobacterium sp. (strain MCS).